The following is a 722-amino-acid chain: MTMFKKAVKSFQWGNHQVTMETGEIARQSGGAVIVNVDDTVVMGTVVASKSAKPGQSFFPLTVDYLEKTYAAGKIPGGFFRREGRPSEGETLISRLIDRPLRPLFPEGFLNEVQVVIHVLSINPDVPSDIPALIAASAALAISGIPFAGPVGAARVGYANGQYLLNPTRTEQATSELDLIVAGTQAAVLMVESEANQLSEEVMLGAVVYGHDQMQTAINAINELVAEAGKPEWDWTAAPKDEPFIAKVTALAEAPLREAYQIRQKGARSDKLKEITKEVMAKLQEEGDVDAVAVNDILFEIEAKIVRSQILNGEPRIDGRDTRTVRPIEIRNGVLPRTHGSALFTRGETQALVVATLGTARDEQIIDALEGEYRDRFMFHYNMPPFATGETGRVGSPKRREIGHGRLAKRALIPVLPSAEDFAYSIRVVSEITESNGSSSMASVCGGCLAMMDAGVPVKAHVAGVAMGLILDGNRFAVLTDILGDEDHLGDMDFKVAGTANGITALQMDIKVQGITKEIMQVALAQAKEGRLHILSKMQEAMGSVRTELSAHAPRMVSFKIHPDKIREVIGKGGATIQALTKETGCSIDIKDDGTVTIASTSAEGMAEAKARIEGITAEAEVGKIYEGPVVKLLEFGALVNILPGKDGLLHISEISNERVKEVKDYLAEGQVVRVKLLAADERGRLRLSLKAAMADEGGTIAPLAGAAEVVAEEAPASGESA.

Positions 487 and 493 each coordinate Mg(2+). One can recognise a KH domain in the interval 554–613; the sequence is PRMVSFKIHPDKIREVIGKGGATIQALTKETGCSIDIKDDGTVTIASTSAEGMAEAKARI. The 69-residue stretch at 623–691 folds into the S1 motif domain; sequence GKIYEGPVVK…ERGRLRLSLK (69 aa).

This sequence belongs to the polyribonucleotide nucleotidyltransferase family. Mg(2+) is required as a cofactor.

Its subcellular location is the cytoplasm. It catalyses the reaction RNA(n+1) + phosphate = RNA(n) + a ribonucleoside 5'-diphosphate. Functionally, involved in mRNA degradation. Catalyzes the phosphorolysis of single-stranded polyribonucleotides processively in the 3'- to 5'-direction. The protein is Polyribonucleotide nucleotidyltransferase of Polynucleobacter asymbioticus (strain DSM 18221 / CIP 109841 / QLW-P1DMWA-1) (Polynucleobacter necessarius subsp. asymbioticus).